The chain runs to 117 residues: uncharacterized protein (117 aa).

The helical transmembrane segment at 1 to 21 (MEIAIIALFIVSIALIAFSYS) threads the bilayer. Residues 38–67 (LSAMQEIYKLKKKMTVLEEELLETNLVIRK) are a coiled coil.

It is found in the cell membrane. This is an uncharacterized protein from Bacillus subtilis (strain 168).